The following is a 600-amino-acid chain: Transcription factor efl-3 (600 aa).

A disordered region spans residues 35 to 65; the sequence is LPEPRVNRTTDPDHENLLPSPVPRPSPAMSQ. The span at 39-50 shows a compositional bias: basic and acidic residues; that stretch reads RVNRTTDPDHEN. 2 consecutive DNA-binding regions follow at residues 95–164 and 253–343; these read RKEK…QWQG and RDRQ…VYCG.

It belongs to the E2F/DP family.

It localises to the nucleus. Its function is as follows. Probable transcription factor which represses gene expression in a subset of ventral nerve cord neurons. Involved in regulating programmed cell death and determining cell fate during development, acting in a partially redundant manner with lin-39 to repress the BH3 domain-encoding gene egl-1 in the VA and VB motor neurons. The sequence is that of Transcription factor efl-3 from Caenorhabditis elegans.